A 44-amino-acid polypeptide reads, in one-letter code: Photosystem I reaction center subunit IX (44 aa).

A helical transmembrane segment spans residues 7-27 (YLSTVPVLTTLWFGSLAGLLI).

It belongs to the PsaJ family.

Its subcellular location is the plastid. The protein localises to the chloroplast thylakoid membrane. Functionally, may help in the organization of the PsaE and PsaF subunits. The polypeptide is Photosystem I reaction center subunit IX (Dioscorea elephantipes (Elephant's foot yam)).